The primary structure comprises 397 residues: Keratinocyte differentiation factor 1 (397 aa).

Residues Met-1 to Leu-16 are compositionally biased toward pro residues. Disordered stretches follow at residues Met-1–Pro-67, Glu-130–Ser-158, and Leu-192–Glu-214. Basic and acidic residues predominate over residues Arg-44–Pro-55. Polar residues predominate over residues Ser-201–Arg-211. The residue at position 218 (Ser-218) is a Phosphoserine. Disordered stretches follow at residues Ile-304–Gly-339 and Ala-361–Leu-392. A compositionally biased stretch (low complexity) spans Ala-321 to Pro-330. The span at Ser-375 to Ser-388 shows a compositional bias: polar residues.

It is found in the cytoplasm. Its subcellular location is the cell junction. Functionally, plays a role in the regulation of the epidermis formation during early development. Required both as an inhibitor of basal cell proliferation and a promoter of differentiation of basal progenitor cell progeny. In Mus musculus (Mouse), this protein is Keratinocyte differentiation factor 1 (Kdf1).